Consider the following 178-residue polypeptide: Orotate phosphoribosyltransferase (178 aa).

5-phospho-alpha-D-ribose 1-diphosphate contacts are provided by residues Arg92, Lys93, Lys96, and 118–126; that span reads EDVITTGSS. 2 residues coordinate orotate: Thr122 and Arg150.

This sequence belongs to the purine/pyrimidine phosphoribosyltransferase family. PyrE subfamily. Homodimer. Mg(2+) serves as cofactor.

The catalysed reaction is orotidine 5'-phosphate + diphosphate = orotate + 5-phospho-alpha-D-ribose 1-diphosphate. It participates in pyrimidine metabolism; UMP biosynthesis via de novo pathway; UMP from orotate: step 1/2. Catalyzes the transfer of a ribosyl phosphate group from 5-phosphoribose 1-diphosphate to orotate, leading to the formation of orotidine monophosphate (OMP). The polypeptide is Orotate phosphoribosyltransferase (Archaeoglobus fulgidus (strain ATCC 49558 / DSM 4304 / JCM 9628 / NBRC 100126 / VC-16)).